The sequence spans 744 residues: Glucosamine inositolphosphorylceramide transferase 1 (744 aa).

3 helical membrane passes run 31–51 (FLVA…WLVV), 378–398 (SLFG…VGFV), and 460–480 (LFFC…VHFL). Substrate is bound by residues Asn534, 558–563 (NSLNNR), 579–581 (DDD), Arg609, and 665–669 (FNCED). Mn(2+) is bound at residue Asp581. A disulfide bridge links Cys667 with Cys718. The active site involves Asp669.

It belongs to the glycosyltransferase 64 family. The cofactor is Mn(2+). As to expression, highly expressed in almost all tissues.

It localises to the membrane. Its pathway is sphingolipid metabolism. In terms of biological role, essential protein. Glycosyltransferase that mediates the glycosylation of glycosylinositol phosphorylceramides (GIPCs), the major sphingolipids in the plasma membrane; acts as a HexN(Ac)-specific GIPC sugar transferase. Responsible for the glycosylation of a subgroup of GIPCs found in seeds and pollen that contain GlcNAc and GlcN (GlcN(Ac)). Maybe involved in the maintenance of cell-cell adhesion. This chain is Glucosamine inositolphosphorylceramide transferase 1, found in Oryza sativa subsp. japonica (Rice).